Consider the following 431-residue polypeptide: Enolase (431 aa).

A (2R)-2-phosphoglycerate-binding site is contributed by Q167. E209 serves as the catalytic Proton donor. Mg(2+) contacts are provided by D246, E289, and D316. The (2R)-2-phosphoglycerate site is built by K341, R370, S371, and K392. K341 (proton acceptor) is an active-site residue.

This sequence belongs to the enolase family. As to quaternary structure, component of the RNA degradosome, a multiprotein complex involved in RNA processing and mRNA degradation. Mg(2+) is required as a cofactor.

The protein resides in the cytoplasm. Its subcellular location is the secreted. It is found in the cell surface. It catalyses the reaction (2R)-2-phosphoglycerate = phosphoenolpyruvate + H2O. The protein operates within carbohydrate degradation; glycolysis; pyruvate from D-glyceraldehyde 3-phosphate: step 4/5. Functionally, catalyzes the reversible conversion of 2-phosphoglycerate (2-PG) into phosphoenolpyruvate (PEP). It is essential for the degradation of carbohydrates via glycolysis. The chain is Enolase from Shewanella baltica (strain OS223).